A 545-amino-acid polypeptide reads, in one-letter code: 2-succinyl-5-enolpyruvyl-6-hydroxy-3-cyclohexene-1-carboxylate synthase (545 aa).

A compositionally biased stretch (polar residues) spans 170–185 (QVSGLQRSAPAPSSDS). The tract at residues 170–193 (QVSGLQRSAPAPSSDSPLGAAPQL) is disordered.

This sequence belongs to the TPP enzyme family. MenD subfamily. As to quaternary structure, homodimer. The cofactor is Mg(2+). Mn(2+) is required as a cofactor. It depends on thiamine diphosphate as a cofactor.

The catalysed reaction is isochorismate + 2-oxoglutarate + H(+) = 5-enolpyruvoyl-6-hydroxy-2-succinyl-cyclohex-3-ene-1-carboxylate + CO2. Its pathway is quinol/quinone metabolism; 1,4-dihydroxy-2-naphthoate biosynthesis; 1,4-dihydroxy-2-naphthoate from chorismate: step 2/7. It functions in the pathway cofactor biosynthesis; phylloquinone biosynthesis. In terms of biological role, catalyzes the thiamine diphosphate-dependent decarboxylation of 2-oxoglutarate and the subsequent addition of the resulting succinic semialdehyde-thiamine pyrophosphate anion to isochorismate to yield 2-succinyl-5-enolpyruvyl-6-hydroxy-3-cyclohexene-1-carboxylate (SEPHCHC). In Parasynechococcus marenigrum (strain WH8102), this protein is 2-succinyl-5-enolpyruvyl-6-hydroxy-3-cyclohexene-1-carboxylate synthase.